Here is an 89-residue protein sequence, read N- to C-terminus: Small ribosomal subunit protein uS15 (89 aa).

It belongs to the universal ribosomal protein uS15 family. Part of the 30S ribosomal subunit. Forms a bridge to the 50S subunit in the 70S ribosome, contacting the 23S rRNA.

Functionally, one of the primary rRNA binding proteins, it binds directly to 16S rRNA where it helps nucleate assembly of the platform of the 30S subunit by binding and bridging several RNA helices of the 16S rRNA. Forms an intersubunit bridge (bridge B4) with the 23S rRNA of the 50S subunit in the ribosome. This is Small ribosomal subunit protein uS15 from Pseudomonas fluorescens (strain SBW25).